Consider the following 517-residue polypeptide: UDP-N-acetylmuramyl-tripeptide synthetase (517 aa).

Position 38 (S38) interacts with UDP-N-acetyl-alpha-D-muramoyl-L-alanyl-D-glutamate. G116–T122 contributes to the ATP binding site. UDP-N-acetyl-alpha-D-muramoyl-L-alanyl-D-glutamate contacts are provided by residues N160, T162 to T163, S189, and R197. Residue K231 is modified to N6-carboxylysine.

The protein belongs to the MurCDEF family. MurE subfamily. In terms of processing, carboxylation is probably crucial for Mg(2+) binding and, consequently, for the gamma-phosphate positioning of ATP.

The protein resides in the cytoplasm. Its pathway is cell wall biogenesis; peptidoglycan biosynthesis. In terms of biological role, catalyzes the addition of an amino acid to the nucleotide precursor UDP-N-acetylmuramoyl-L-alanyl-D-glutamate (UMAG) in the biosynthesis of bacterial cell-wall peptidoglycan. The polypeptide is UDP-N-acetylmuramyl-tripeptide synthetase (Lacticaseibacillus paracasei (strain ATCC 334 / BCRC 17002 / CCUG 31169 / CIP 107868 / KCTC 3260 / NRRL B-441) (Lactobacillus paracasei)).